A 319-amino-acid chain; its full sequence is Glutamyl-Q tRNA(Asp) synthetase (319 aa).

L-glutamate is bound by residues 23 to 27 (RFAPS) and glutamate 59. The 'HIGH' region signature appears at 26–36 (PSPSGPLHAGS). The Zn(2+) site is built by cysteine 115, cysteine 117, tyrosine 139, and cysteine 143. L-glutamate is bound by residues tyrosine 197 and arginine 215. Residues 254–258 (KLSKQ) carry the 'KMSKS' region motif. Lysine 257 contributes to the ATP binding site.

Belongs to the class-I aminoacyl-tRNA synthetase family. GluQ subfamily. Zn(2+) is required as a cofactor.

In terms of biological role, catalyzes the tRNA-independent activation of glutamate in presence of ATP and the subsequent transfer of glutamate onto a tRNA(Asp). Glutamate is transferred on the 2-amino-5-(4,5-dihydroxy-2-cyclopenten-1-yl) moiety of the queuosine in the wobble position of the QUC anticodon. The polypeptide is Glutamyl-Q tRNA(Asp) synthetase (Bordetella bronchiseptica (strain ATCC BAA-588 / NCTC 13252 / RB50) (Alcaligenes bronchisepticus)).